The sequence spans 524 residues: 2-isopropylmalate synthase (524 aa).

Residues 5–267 (VIIFDTTLRD…HTNIRHSEIH (263 aa)) enclose the Pyruvate carboxyltransferase domain. Mn(2+) is bound by residues Asp14, His202, His204, and Asn238. Residues 392-524 (KLEYLGVQSG…KTDKINTESV (133 aa)) form a regulatory domain region.

Belongs to the alpha-IPM synthase/homocitrate synthase family. LeuA type 1 subfamily. In terms of assembly, homodimer. Mn(2+) is required as a cofactor.

The protein resides in the cytoplasm. It carries out the reaction 3-methyl-2-oxobutanoate + acetyl-CoA + H2O = (2S)-2-isopropylmalate + CoA + H(+). The protein operates within amino-acid biosynthesis; L-leucine biosynthesis; L-leucine from 3-methyl-2-oxobutanoate: step 1/4. In terms of biological role, catalyzes the condensation of the acetyl group of acetyl-CoA with 3-methyl-2-oxobutanoate (2-ketoisovalerate) to form 3-carboxy-3-hydroxy-4-methylpentanoate (2-isopropylmalate). The polypeptide is 2-isopropylmalate synthase (Aeromonas hydrophila subsp. hydrophila (strain ATCC 7966 / DSM 30187 / BCRC 13018 / CCUG 14551 / JCM 1027 / KCTC 2358 / NCIMB 9240 / NCTC 8049)).